A 700-amino-acid chain; its full sequence is Elongation factor G 1 (700 aa).

The 283-residue stretch at 8 to 290 (ERYRNIGISA…AVIDYLPSPA (283 aa)) folds into the tr-type G domain. Residues 17–24 (AHIDAGKT), 88–92 (DTPGH), and 142–145 (NKMD) each bind GTP.

It belongs to the TRAFAC class translation factor GTPase superfamily. Classic translation factor GTPase family. EF-G/EF-2 subfamily.

The protein localises to the cytoplasm. Functionally, catalyzes the GTP-dependent ribosomal translocation step during translation elongation. During this step, the ribosome changes from the pre-translocational (PRE) to the post-translocational (POST) state as the newly formed A-site-bound peptidyl-tRNA and P-site-bound deacylated tRNA move to the P and E sites, respectively. Catalyzes the coordinated movement of the two tRNA molecules, the mRNA and conformational changes in the ribosome. The polypeptide is Elongation factor G 1 (Bordetella parapertussis (strain 12822 / ATCC BAA-587 / NCTC 13253)).